The sequence spans 341 residues: MVSEAPPFWWDKPDWRALSLAPAAWLYGAVAGRRLLKAEPPKISLPVLCVGNFTVGGAGKTPTAIAFSAGAKARGLNPGIVSRGYGGAYKGLHVVDPAHDSARYVGDEPLLLARHASVALCPDRLKAARHLQALGCDFIIMDDGFQSARLFADFSLLVVDAARGIGNGKVIPAGPLRAPLTDQMRKTDALLRIGKGDGADFVIRQTARAGRPIYEARLKPSSTTPIAGNRWLAFAGIGNPEKFYASVAEAGGEIVETCSFPDHHSFASDDIRNLTDTARRQGLGLITTAKDQVRLATMIGVPAGFLTKLAVLNVDLKFDRNDALDHILDTVIERFKSRVTS.

54–61 (TVGGAGKT) lines the ATP pocket.

The protein belongs to the LpxK family.

It catalyses the reaction a lipid A disaccharide + ATP = a lipid IVA + ADP + H(+). It participates in glycolipid biosynthesis; lipid IV(A) biosynthesis; lipid IV(A) from (3R)-3-hydroxytetradecanoyl-[acyl-carrier-protein] and UDP-N-acetyl-alpha-D-glucosamine: step 6/6. Transfers the gamma-phosphate of ATP to the 4'-position of a tetraacyldisaccharide 1-phosphate intermediate (termed DS-1-P) to form tetraacyldisaccharide 1,4'-bis-phosphate (lipid IVA). This chain is Tetraacyldisaccharide 4'-kinase, found in Brucella anthropi (strain ATCC 49188 / DSM 6882 / CCUG 24695 / JCM 21032 / LMG 3331 / NBRC 15819 / NCTC 12168 / Alc 37) (Ochrobactrum anthropi).